Here is a 164-residue protein sequence, read N- to C-terminus: ATP synthase subunit b (164 aa).

The chain crosses the membrane as a helical span at residues 6–26; the sequence is GELIGNFILITGSFILLLVLI.

The protein belongs to the ATPase B chain family. As to quaternary structure, F-type ATPases have 2 components, F(1) - the catalytic core - and F(0) - the membrane proton channel. F(1) has five subunits: alpha(3), beta(3), gamma(1), delta(1), epsilon(1). F(0) has three main subunits: a(1), b(2) and c(10-14). The alpha and beta chains form an alternating ring which encloses part of the gamma chain. F(1) is attached to F(0) by a central stalk formed by the gamma and epsilon chains, while a peripheral stalk is formed by the delta and b chains.

The protein localises to the cell membrane. F(1)F(0) ATP synthase produces ATP from ADP in the presence of a proton or sodium gradient. F-type ATPases consist of two structural domains, F(1) containing the extramembraneous catalytic core and F(0) containing the membrane proton channel, linked together by a central stalk and a peripheral stalk. During catalysis, ATP synthesis in the catalytic domain of F(1) is coupled via a rotary mechanism of the central stalk subunits to proton translocation. In terms of biological role, component of the F(0) channel, it forms part of the peripheral stalk, linking F(1) to F(0). In Streptococcus pneumoniae serotype 2 (strain D39 / NCTC 7466), this protein is ATP synthase subunit b.